Here is a 462-residue protein sequence, read N- to C-terminus: Cysteine--tRNA ligase (462 aa).

Zn(2+) is bound at residue C30. Residues 32–42 carry the 'HIGH' region motif; that stretch reads MTVYDYCHIGH. Residues C214, H239, and E243 each coordinate Zn(2+). The 'KMSKS' region motif lies at 271–275; sequence KMSKS. K274 contributes to the ATP binding site.

The protein belongs to the class-I aminoacyl-tRNA synthetase family. Monomer. Zn(2+) is required as a cofactor.

It localises to the cytoplasm. It catalyses the reaction tRNA(Cys) + L-cysteine + ATP = L-cysteinyl-tRNA(Cys) + AMP + diphosphate. The polypeptide is Cysteine--tRNA ligase (Herminiimonas arsenicoxydans).